A 118-amino-acid chain; its full sequence is Na(+)/H(+) antiporter subunit G1 (118 aa).

3 consecutive transmembrane segments (helical) span residues 9–29 (LAVI…IGII), 47–67 (LGAI…DGYI), and 69–89 (MQLI…SHLI).

The protein belongs to the CPA3 antiporters (TC 2.A.63) subunit G family. May form a heterooligomeric complex that consists of seven subunits: mnhA1, mnhB1, mnhC1, mnhD1, mnhE1, mnhF1 and mnhG1.

The protein resides in the cell membrane. Functionally, mnh complex is a Na(+)/H(+) antiporter involved in Na(+) excretion. The sequence is that of Na(+)/H(+) antiporter subunit G1 (mnhG1) from Staphylococcus haemolyticus (strain JCSC1435).